The sequence spans 193 residues: Cytidylate kinase (193 aa).

ATP is bound at residue G12–T20.

Belongs to the cytidylate kinase family. Type 2 subfamily.

It localises to the cytoplasm. The enzyme catalyses CMP + ATP = CDP + ADP. It catalyses the reaction dCMP + ATP = dCDP + ADP. The polypeptide is Cytidylate kinase (Methanopyrus kandleri (strain AV19 / DSM 6324 / JCM 9639 / NBRC 100938)).